Here is a 326-residue protein sequence, read N- to C-terminus: DNA-binding death effector domain-containing protein 2 (326 aa).

Residues 25-104 (SLHRMFEVVG…RHDLLPHLAR (80 aa)) form the DED domain. A Nuclear localization signal motif is present at residues 104-109 (RKRRRP). The interval 104–194 (RKRRRPVSPE…PARPSSEGKV (91 aa)) is disordered. Over residues 136–146 (SSSSANSQQGQ) the composition is skewed to low complexity. The short motif at 155–173 (KRQRRSRGRPSGGARRRRR) is the Bipartite nuclear localization signal element. Residues 155 to 174 (KRQRRSRGRPSGGARRRRRG) show a composition bias toward basic residues. Positions 175–191 (APAAPQQQSEPARPSSE) are enriched in low complexity.

Interacts with CASP8, CASP10 and GTF3C3. Homodimerizes and heterodimerizes with DEDD. As to expression, expressed in most tissues. High levels were found in liver, kidney, heart, ovary, spleen, testes, skeletal muscle and peripheral blood leukocytes. Expression was absent or low in colon and small intestine. Expression is relatively high in the tumor cell lines chronic myologenous leukemia K-562 and the colorectal adenocarcinoma SW480. Expression is moderate in the cervical carcinoma HeLa, the Burkitt's lymphoma Raji, the lung carcinoma A-549, and the melanoma G-361. In contrast, two leukemia cell lines, HL-60 (promyelocytic leukemia) and MOLT-4 (lymphoblastic leukemia), show relatively low levels.

Its subcellular location is the nucleus. It is found in the nucleolus. Its function is as follows. May play a critical role in death receptor-induced apoptosis and may target CASP8 and CASP10 to the nucleus. May regulate degradation of intermediate filaments during apoptosis. May play a role in the general transcription machinery in the nucleus and might be an important regulator of the activity of GTF3C3. The protein is DNA-binding death effector domain-containing protein 2 (DEDD2) of Homo sapiens (Human).